The following is a 416-amino-acid chain: Serine hydroxymethyltransferase (416 aa).

Residues leucine 121 and 125–127 (GHL) contribute to the (6S)-5,6,7,8-tetrahydrofolate site. Lysine 229 is subject to N6-(pyridoxal phosphate)lysine.

This sequence belongs to the SHMT family. Homodimer. It depends on pyridoxal 5'-phosphate as a cofactor.

It localises to the cytoplasm. It catalyses the reaction (6R)-5,10-methylene-5,6,7,8-tetrahydrofolate + glycine + H2O = (6S)-5,6,7,8-tetrahydrofolate + L-serine. Its pathway is one-carbon metabolism; tetrahydrofolate interconversion. It participates in amino-acid biosynthesis; glycine biosynthesis; glycine from L-serine: step 1/1. Functionally, catalyzes the reversible interconversion of serine and glycine with tetrahydrofolate (THF) serving as the one-carbon carrier. This reaction serves as the major source of one-carbon groups required for the biosynthesis of purines, thymidylate, methionine, and other important biomolecules. Also exhibits THF-independent aldolase activity toward beta-hydroxyamino acids, producing glycine and aldehydes, via a retro-aldol mechanism. This is Serine hydroxymethyltransferase from Neisseria meningitidis serogroup C / serotype 2a (strain ATCC 700532 / DSM 15464 / FAM18).